We begin with the raw amino-acid sequence, 101 residues long: Doublesex- and mab-3-related transcription factor 1 (101 aa).

Positions 1-13 (SLIAERQRVMAAQ) form a DNA-binding region, DM. Over residues 52–75 (CLLLESSSPTHSTSTVTTVSTSPS) the composition is skewed to low complexity. Residues 52–79 (CLLLESSSPTHSTSTVTTVSTSPSEGRM) are disordered.

It belongs to the DMRT family.

The protein resides in the nucleus. Functionally, may be required for testis development. The sequence is that of Doublesex- and mab-3-related transcription factor 1 (DMRT1) from Alligator mississippiensis (American alligator).